The following is a 132-amino-acid chain: Interleukin-13 (132 aa).

The signal sequence occupies residues 1-18 (MALLLTTVIALTCLGGFA). N-linked (GlcNAc...) asparagine glycans are attached at residues N38, N49, N57, and N72. Intrachain disulfides connect C48–C76 and C64–C90.

Belongs to the IL-4/IL-13 family. Interacts with IL13RA2.

The protein localises to the secreted. Cytokine that plays important roles in allergic inflammation and immune response to parasite infection. Synergizes with IL2 in regulating interferon-gamma synthesis. Stimulates B-cell proliferation, and activation of eosinophils, basophils, and mast cells. Plays an important role in controlling IL33 activity by modulating the production of transmembrane and soluble forms of interleukin-1 receptor-like 1/IL1RL1. Displays the capacity to antagonize Th1-driven proinflammatory immune response and downregulates synthesis of many proinflammatory cytokines including IL1, IL6, IL10, IL12 and TNF-alpha through a mechanism that partially involves suppression of NF-kappa-B. Also functions on nonhematopoietic cells, including endothelial cells where it induces vascular cell adhesion protein 1/VCAM1, which is important in the recruitment of eosinophils. Exerts its biological effects through its receptors which comprises the IL4R chain and the IL13RA1 chain, to activate JAK1 and TYK2, leading to the activation of STAT6. Aside from IL13RA1, another receptor IL13RA2 acts as a high affinity decoy for IL13 and mediates internalization and depletion of extracellular IL13. This Pan troglodytes (Chimpanzee) protein is Interleukin-13 (IL13).